The sequence spans 355 residues: Putative inositol monophosphatase 3 (355 aa).

A helical membrane pass occupies residues 16–36 (VPATIFAILLTIVLVYFLNFH). The Mg(2+) site is built by Glu127, Asp167, Leu169, Asp170, and Asp292. Glu127 provides a ligand contact to substrate. Substrate-binding positions include 169–172 (LDAT) and Asp292.

This sequence belongs to the inositol monophosphatase superfamily. It depends on Mg(2+) as a cofactor.

The protein resides in the membrane. It catalyses the reaction a myo-inositol phosphate + H2O = myo-inositol + phosphate. It participates in polyol metabolism; myo-inositol biosynthesis; myo-inositol from D-glucose 6-phosphate: step 2/2. The sequence is that of Putative inositol monophosphatase 3 from Drosophila pseudoobscura pseudoobscura (Fruit fly).